A 209-amino-acid polypeptide reads, in one-letter code: T-cell surface glycoprotein CD8 beta chain (209 aa).

Residues 1-21 (MRPRMWLLLSAQLAALHGNSV) form the signal peptide. One can recognise an Ig-like V-type domain in the interval 22–131 (LQQTPAYIMV…TLIFGTGTQL (110 aa)). The Extracellular segment spans residues 22–169 (LQQTPAYIMV…ETRKGPLCSP (148 aa)). Residues Cys-41 and Cys-115 are joined by a disulfide bond. Asn-101 carries N-linked (GlcNAc...) asparagine glycosylation. The helical transmembrane segment at 170-190 (ITLSLLVAGILVLLVSLGVAI) threads the bilayer. Residues 191 to 209 (HLYCRQRRARLRFMKQFYK) lie on the Cytoplasmic side of the membrane.

Forms disulfide-linked heterodimers with CD8A at the cell surface. Interacts with CD3D; this interaction couples TCR-CD3 with CD8. Interacts with LCK. Post-translationally, phosphorylated as a consequence of T-cell activation. Palmitoylated at the cytoplasmic tail and thereby targets the heterodimer CD8A/CD8B to lipid rafts unlike CD8A homodimers.

The protein localises to the cell membrane. In terms of biological role, integral membrane glycoprotein that plays an essential role in the immune response and serves multiple functions in responses against both external and internal offenses. In T-cells, functions primarily as a coreceptor for MHC class I molecule:peptide complex. The antigens presented by class I peptides are derived from cytosolic proteins while class II derived from extracellular proteins. Interacts simultaneously with the T-cell receptor (TCR) and the MHC class I proteins presented by antigen presenting cells (APCs). In turn, recruits the Src kinase LCK to the vicinity of the TCR-CD3 complex. A palmitoylation site in the cytoplasmic tail of CD8B chain contributes to partitioning of CD8 into the plasma membrane lipid rafts where signaling proteins are enriched. Once LCK recruited, it initiates different intracellular signaling pathways by phosphorylating various substrates ultimately leading to lymphokine production, motility, adhesion and activation of cytotoxic T-lymphocytes (CTLs). Additionally, plays a critical role in thymic selection of CD8+ T-cells. The polypeptide is T-cell surface glycoprotein CD8 beta chain (CD8B) (Saimiri sciureus (Common squirrel monkey)).